The chain runs to 202 residues: Small ribosomal subunit protein uS4c (202 aa).

Residues 90–153 (MRLDNVTFRL…KSETIISKNI (64 aa)) enclose the S4 RNA-binding domain.

Belongs to the universal ribosomal protein uS4 family. Part of the 30S ribosomal subunit. Contacts protein S5. The interaction surface between S4 and S5 is involved in control of translational fidelity.

It is found in the plastid. Its subcellular location is the chloroplast. One of the primary rRNA binding proteins, it binds directly to 16S rRNA where it nucleates assembly of the body of the 30S subunit. Functionally, with S5 and S12 plays an important role in translational accuracy. This chain is Small ribosomal subunit protein uS4c (rps4), found in Hypnum cupressiforme (Cypress-leaved plait-moss).